Consider the following 552-residue polypeptide: Probable malate:quinone oxidoreductase (552 aa).

The segment at 530–552 (DAKPATPEAKPAQASSPQHDMAL) is disordered. Over residues 542–552 (QASSPQHDMAL) the composition is skewed to polar residues.

It belongs to the MQO family. FAD serves as cofactor.

It catalyses the reaction (S)-malate + a quinone = a quinol + oxaloacetate. It functions in the pathway carbohydrate metabolism; tricarboxylic acid cycle; oxaloacetate from (S)-malate (quinone route): step 1/1. This Cronobacter sakazakii (strain ATCC BAA-894) (Enterobacter sakazakii) protein is Probable malate:quinone oxidoreductase.